We begin with the raw amino-acid sequence, 549 residues long: Oxygen-dependent choline dehydrogenase (549 aa).

4–33 (DFVIIGSGSAGSAMASRLSEDGKHTVIVLE) serves as a coordination point for FAD. Catalysis depends on H465, which acts as the Proton acceptor.

This sequence belongs to the GMC oxidoreductase family. It depends on FAD as a cofactor.

It catalyses the reaction choline + A = betaine aldehyde + AH2. It carries out the reaction betaine aldehyde + NAD(+) + H2O = glycine betaine + NADH + 2 H(+). The protein operates within amine and polyamine biosynthesis; betaine biosynthesis via choline pathway; betaine aldehyde from choline (cytochrome c reductase route): step 1/1. In terms of biological role, involved in the biosynthesis of the osmoprotectant glycine betaine. Catalyzes the oxidation of choline to betaine aldehyde and betaine aldehyde to glycine betaine at the same rate. The sequence is that of Oxygen-dependent choline dehydrogenase from Rhizobium rhizogenes (strain K84 / ATCC BAA-868) (Agrobacterium radiobacter).